The following is a 244-amino-acid chain: Type III pantothenate kinase (244 aa).

11–18 (DAGNTSIK) is a binding site for ATP. Residues Tyr-90 and 97–100 (GIDR) each bind substrate. Asp-99 (proton acceptor) is an active-site residue. Asp-119 contributes to the K(+) binding site. Residue Thr-122 participates in ATP binding. Residue Thr-175 participates in substrate binding.

This sequence belongs to the type III pantothenate kinase family. Homodimer. NH4(+) serves as cofactor. K(+) is required as a cofactor.

It is found in the cytoplasm. It carries out the reaction (R)-pantothenate + ATP = (R)-4'-phosphopantothenate + ADP + H(+). Its pathway is cofactor biosynthesis; coenzyme A biosynthesis; CoA from (R)-pantothenate: step 1/5. Functionally, catalyzes the phosphorylation of pantothenate (Pan), the first step in CoA biosynthesis. This chain is Type III pantothenate kinase, found in Marinomonas sp. (strain MWYL1).